Here is a 385-residue protein sequence, read N- to C-terminus: V-type proton ATPase subunit C (385 aa).

The protein belongs to the V-ATPase C subunit family. V-ATPase is a heteromultimeric enzyme made up of two complexes: the ATP-hydrolytic V1 complex and the proton translocation V0 complex. The V1 complex consists of three catalytic AB heterodimers that form a heterohexamer, three peripheral stalks each consisting of EG heterodimers, one central rotor including subunits D and F, and the regulatory subunits C and H. The proton translocation complex V0 consists of the proton transport subunit a, a ring of proteolipid subunits c9c'', rotary subunit d, subunits e and f, and the accessory subunits vah-19/Ac45 and vah-20/PRR. Interacts with V-type proton ATPase subunits a1 unc-32, a2 vha-5 and a3 vha-6.

The protein resides in the cytoplasm. It is found in the membrane. Functionally, subunit of the V1 complex of vacuolar(H+)-ATPase (V-ATPase), a multisubunit enzyme composed of a peripheral complex (V1) that hydrolyzes ATP and a membrane integral complex (V0) that translocates protons. V-ATPase is responsible for acidifying and maintaining the pH of intracellular compartments and in some cell types, is targeted to the plasma membrane, where it is responsible for acidifying the extracellular environment. Subunit C is necessary for the assembly of the catalytic sector of the enzyme and is likely to have a specific function in its catalytic activity. Has roles in embryogenesis and ovulation. The chain is V-type proton ATPase subunit C from Caenorhabditis briggsae.